Consider the following 184-residue polypeptide: Peptide deformylase (184 aa).

Positions 111 and 154 each coordinate Fe cation. The active site involves Glu155. Position 158 (His158) interacts with Fe cation.

The protein belongs to the polypeptide deformylase family. The cofactor is Fe(2+).

The catalysed reaction is N-terminal N-formyl-L-methionyl-[peptide] + H2O = N-terminal L-methionyl-[peptide] + formate. Its function is as follows. Removes the formyl group from the N-terminal Met of newly synthesized proteins. Requires at least a dipeptide for an efficient rate of reaction. N-terminal L-methionine is a prerequisite for activity but the enzyme has broad specificity at other positions. The chain is Peptide deformylase from Lacticaseibacillus casei (strain BL23) (Lactobacillus casei).